We begin with the raw amino-acid sequence, 189 residues long: Glycerol-3-phosphate acyltransferase (189 aa).

A run of 4 helical transmembrane segments spans residues 1–21 (MFWL…AIVL), 77–97 (LQEQ…PVYF), 111–131 (MLMG…LLTF), and 151–171 (LLAW…VMIV).

This sequence belongs to the PlsY family. As to quaternary structure, probably interacts with PlsX.

Its subcellular location is the cell inner membrane. It catalyses the reaction an acyl phosphate + sn-glycerol 3-phosphate = a 1-acyl-sn-glycero-3-phosphate + phosphate. Its pathway is lipid metabolism; phospholipid metabolism. In terms of biological role, catalyzes the transfer of an acyl group from acyl-phosphate (acyl-PO(4)) to glycerol-3-phosphate (G3P) to form lysophosphatidic acid (LPA). This enzyme utilizes acyl-phosphate as fatty acyl donor, but not acyl-CoA or acyl-ACP. The protein is Glycerol-3-phosphate acyltransferase of Pseudomonas putida (strain W619).